Here is a 538-residue protein sequence, read N- to C-terminus: Calcium-dependent protein kinase 32 (538 aa).

Positions 1–37 (MGNCCGTAGSLAQNDNKPKKGRKKQNPFSIDYGLHHG) are disordered. A lipid anchor (N-myristoyl glycine) is attached at G2. Residues 63-321 (YTLGRELGRG…AQQVLDHPWL (259 aa)) form the Protein kinase domain. ATP-binding positions include 69–77 (LGRGEFGVT) and K92. D187 serves as the catalytic Proton acceptor. S227 is subject to Phosphoserine. Positions 327 to 357 (APNVSLGETVRARLKQFTVMNKLKKRALRVI) are autoinhibitory domain. EF-hand domains are found at residues 364–399 (EEASGIREGFQIMDTSQRGKINIDELKIGLQKLGHA), 400–435 (IPQDDLQILMDAGDIDRDGYLDCDEFIAISVHLRKM), 436–470 (GNDEHLKKAFAFFDQNNNGYIEIEELREALSDELG), and 471–506 (TSEEVVDAIIRDVDTDKDGRISYEEFVTMMKTGTDW). D377, S379, K383, E388, D413, D415, D417, Y419, E424, D449, N451, N453, Y455, E460, D484, D486, D488, and R490 together coordinate Ca(2+). S492 carries the post-translational modification Phosphoserine. E495 is a Ca(2+) binding site.

This sequence belongs to the protein kinase superfamily. Ser/Thr protein kinase family. CDPK subfamily. In terms of assembly, interacts with ABF4. Interacts with CNGC18. In terms of tissue distribution, expressed in embryos and most of the vegetative tissues.

The protein resides in the nucleus. It is found in the membrane. It carries out the reaction L-seryl-[protein] + ATP = O-phospho-L-seryl-[protein] + ADP + H(+). The enzyme catalyses L-threonyl-[protein] + ATP = O-phospho-L-threonyl-[protein] + ADP + H(+). Activated by calcium. Autophosphorylation may play an important role in the regulation of the kinase activity. In terms of biological role, may play a role in signal transduction pathways that involve calcium as a second messenger. Involved in maintaining Ca2+ homeostasis in pollen tube tips by regulating CNGC18. Functions as regulator of the calcium-mediated abscisic acid (ABA) signaling pathway. Phosphorylates ABA-responsive transcription factor ABF4 in vitro. This chain is Calcium-dependent protein kinase 32, found in Arabidopsis thaliana (Mouse-ear cress).